We begin with the raw amino-acid sequence, 147 residues long: Hemoglobin subunit epsilon (147 aa).

The Globin domain occupies 3 to 147; sequence HFTAEEKAAI…VAIALGHKYH (145 aa). Phosphoserine occurs at positions 14 and 51. Heme b is bound by residues His64 and His93.

This sequence belongs to the globin family. In terms of assembly, heterotetramer of two alpha chains and two epsilon chains in early embryonic hemoglobin Gower-2; two zeta chains and two epsilon chains in early embryonic hemoglobin Gower-1. Red blood cells.

The epsilon chain is a beta-type chain of early mammalian embryonic hemoglobin. In Callithrix jacchus (White-tufted-ear marmoset), this protein is Hemoglobin subunit epsilon (HBE1).